Reading from the N-terminus, the 221-residue chain is Octanoyltransferase (221 aa).

The 186-residue stretch at 36–221 folds into the BPL/LPL catalytic domain; it reads KKEDNQLFFC…LRSIFMEIFA (186 aa). Residues 81-88, 154-156, and 167-169 contribute to the substrate site; these read RGGDITYH, AIG, and GFA. The Acyl-thioester intermediate role is filled by Cys-185.

This sequence belongs to the LipB family.

It localises to the cytoplasm. It catalyses the reaction octanoyl-[ACP] + L-lysyl-[protein] = N(6)-octanoyl-L-lysyl-[protein] + holo-[ACP] + H(+). It participates in protein modification; protein lipoylation via endogenous pathway; protein N(6)-(lipoyl)lysine from octanoyl-[acyl-carrier-protein]: step 1/2. In terms of biological role, catalyzes the transfer of endogenously produced octanoic acid from octanoyl-acyl-carrier-protein onto the lipoyl domains of lipoate-dependent enzymes. Lipoyl-ACP can also act as a substrate although octanoyl-ACP is likely to be the physiological substrate. In Parabacteroides distasonis (strain ATCC 8503 / DSM 20701 / CIP 104284 / JCM 5825 / NCTC 11152), this protein is Octanoyltransferase.